Here is a 354-residue protein sequence, read N- to C-terminus: MKSLLLLVLISFCWADHHSDNYTVDHDRVIHIQAENGPRLLVEAEQAKVFSRRGGNVTLPCKFYRDPTAFGSGTHKIRIKWTKLTSDYLKEVDVFVSMGYHKKTYGGYHGRVFLKGGSDNDASLVITDLTLEDYGRYKCEVIEGLEDDTAVVALDLQGVVFPYFPRLGRYNLNFHEAQQACLDQDAVIASFDQLYDAWRSGLDWCNAGWLSDGSVQYPITKPREPCGGQNTVPGVRNYGFWDKDKSRYDVFCFTSNFNGRFYYLIHPTKLTYDEAVQACLNDGAQIAKVGQIFAAWKLLGYDRCDAGWLADGSVRYPISRPRRRCSPSEAAVRFVGFPDKKHKLYGVYCFRAYN.

The propeptide occupies 1–15; it reads MKSLLLLVLISFCWA. Residues Asn-21 and Asn-56 are each glycosylated (N-linked (GlcNAc...) asparagine). The Ig-like V-type domain maps to 38 to 152; sequence PRLLVEAEQA…EGLEDDTAVV (115 aa). Disulfide bonds link Cys-61–Cys-139, Cys-181–Cys-252, Cys-205–Cys-226, Cys-279–Cys-349, and Cys-304–Cys-325. 2 Link domains span residues 159–254 and 259–351; these read VVFP…FCFT and GRFY…YCFR.

It belongs to the HAPLN family.

Its subcellular location is the secreted. It localises to the extracellular space. It is found in the extracellular matrix. Functionally, stabilizes the aggregates of proteoglycan monomers with hyaluronic acid in the extracellular cartilage matrix. In Bos taurus (Bovine), this protein is Hyaluronan and proteoglycan link protein 1 (HAPLN1).